The primary structure comprises 269 residues: 2' cyclic ADP-D-ribose synthase AbTIR (269 aa).

A coiled-coil region spans residues 31–99; the sequence is LKTKLSEISR…KQQKDEIEHQ (69 aa). The TIR domain maps to 133–266; the sequence is PEYDLFISHA…EIAHQLADVI (134 aa). NAD(+) is bound by residues Ser143, Lys172, and Lys202. Residue Glu208 is part of the active site. Residue Lys245 participates in NAD(+) binding.

Homodimer. In the presence of NAD(+) analog 8-amino-isoquinoline adenine dinucleotide (3AD) forms filaments with 3AD between monomers; conformational changes occur upon 3AD binding.

The catalysed reaction is NAD(+) = 2'cADPR + nicotinamide + H(+). The enzyme catalyses NAD(+) + H2O = ADP-D-ribose + nicotinamide + H(+). It carries out the reaction NADP(+) + H2O = ADP-D-ribose 2'-phosphate + nicotinamide + H(+). Its function is as follows. NAD(+) hydrolase (NADase) that catalyzes cleavage of NAD(+) into ADP-D-ribose (ADPR) and nicotinamide. In addition to ADPR, also generates a cyclization variant of cyclic ADPR (cADPR), termed 2'cADPR (v-cADPR). Cleaves NADP(+), but does not cyclize the product. In Acinetobacter baumannii (strain 1295743), this protein is 2' cyclic ADP-D-ribose synthase AbTIR.